The chain runs to 619 residues: Zinc finger CCCH domain-containing protein 67 (619 aa).

ANK repeat units follow at residues glutamate 52–proline 81 and serine 88–leucine 120. 2 C3H1-type zinc fingers span residues histidine 213–phenylalanine 241 and glutamine 249–aspartate 273. Positions serine 308–glutamine 341 are disordered. The span at alanine 322 to alanine 337 shows a compositional bias: gly residues.

The protein is Zinc finger CCCH domain-containing protein 67 of Oryza sativa subsp. japonica (Rice).